The chain runs to 396 residues: MAKAKFERTKPHVNIGTIGHVDHGKTTLTAAISKVLYDKYPDLNEARDFATIDSAPEERQRGITINISHVEYQTEKRHYAHVDAPGHADYIKNMITGAAQMDGAILVVAATDGPMAQTREHVLLARQVGVPALLVALNKSDMVEDEELLELVEMEVRELLSSQEFDGDEAPVIRTSGLKALEGDPQWVKSVEDLMDAVDEYIPDPVRDKDKPFLMPIEDVFTITGRGTVVTGRAERGTLKINSEVEIVGIRDVQKTTVTGIEMFHKQLDEAWAGENCGLLLRGLKRDDVERGQVVVEPGSITPHTNFEANVYILSKDEGGRHNPFYSNYRPQFYFRTTDVTGVITLPEGTEMVMPGDTTEMSVELIQPIAMEEGLGFAIREGGRTVGSGRVTKITK.

In terms of domain architecture, tr-type G spans 10–206; sequence KPHVNIGTIG…AVDEYIPDPV (197 aa). The G1 stretch occupies residues 19 to 26; the sequence is GHVDHGKT. A GTP-binding site is contributed by 19–26; it reads GHVDHGKT. T26 serves as a coordination point for Mg(2+). Residues 62–66 form a G2 region; the sequence is GITIN. The tract at residues 83–86 is G3; the sequence is DAPG. GTP-binding positions include 83–87 and 138–141; these read DAPGH and NKSD. Residues 138–141 are G4; it reads NKSD. The interval 176 to 178 is G5; it reads SGL.

It belongs to the TRAFAC class translation factor GTPase superfamily. Classic translation factor GTPase family. EF-Tu/EF-1A subfamily. As to quaternary structure, monomer.

Its subcellular location is the cytoplasm. The enzyme catalyses GTP + H2O = GDP + phosphate + H(+). Its function is as follows. GTP hydrolase that promotes the GTP-dependent binding of aminoacyl-tRNA to the A-site of ribosomes during protein biosynthesis. The protein is Elongation factor Tu of Micrococcus luteus (strain ATCC 4698 / DSM 20030 / JCM 1464 / CCM 169 / CCUG 5858 / IAM 1056 / NBRC 3333 / NCIMB 9278 / NCTC 2665 / VKM Ac-2230) (Micrococcus lysodeikticus).